Reading from the N-terminus, the 177-residue chain is Large ribosomal subunit protein uL6 (177 aa).

This sequence belongs to the universal ribosomal protein uL6 family. As to quaternary structure, part of the 50S ribosomal subunit.

Functionally, this protein binds to the 23S rRNA, and is important in its secondary structure. It is located near the subunit interface in the base of the L7/L12 stalk, and near the tRNA binding site of the peptidyltransferase center. This is Large ribosomal subunit protein uL6 from Methanococcoides burtonii (strain DSM 6242 / NBRC 107633 / OCM 468 / ACE-M).